Consider the following 608-residue polypeptide: 1-deoxy-D-xylulose-5-phosphate synthase (608 aa).

Thiamine diphosphate-binding positions include His66 and 107 to 109; that span reads GHA. Asp138 is a Mg(2+) binding site. Residues 139 to 140, Asn167, Phe277, and Glu350 contribute to the thiamine diphosphate site; that span reads GA. Asn167 serves as a coordination point for Mg(2+).

It belongs to the transketolase family. DXPS subfamily. In terms of assembly, homodimer. Mg(2+) serves as cofactor. It depends on thiamine diphosphate as a cofactor.

It carries out the reaction D-glyceraldehyde 3-phosphate + pyruvate + H(+) = 1-deoxy-D-xylulose 5-phosphate + CO2. Its pathway is metabolic intermediate biosynthesis; 1-deoxy-D-xylulose 5-phosphate biosynthesis; 1-deoxy-D-xylulose 5-phosphate from D-glyceraldehyde 3-phosphate and pyruvate: step 1/1. In terms of biological role, catalyzes the acyloin condensation reaction between C atoms 2 and 3 of pyruvate and glyceraldehyde 3-phosphate to yield 1-deoxy-D-xylulose-5-phosphate (DXP). This Thermotoga sp. (strain RQ2) protein is 1-deoxy-D-xylulose-5-phosphate synthase.